Consider the following 313-residue polypeptide: Probable cell division protein WhiA (313 aa).

Positions 277–311 form a DNA-binding region, H-T-H motif; it reads SLKEVAAQVPDGPISKSGVNHRFQKIREIAKQLKE.

It belongs to the WhiA family.

Functionally, involved in cell division and chromosome segregation. This chain is Probable cell division protein WhiA, found in Lactobacillus johnsonii (strain CNCM I-12250 / La1 / NCC 533).